The following is a 332-amino-acid chain: Fructose-1,6-bisphosphatase class 1 (332 aa).

Residues Glu89, Asp110, Leu112, and Asp113 each contribute to the Mg(2+) site. Substrate contacts are provided by residues 113–116, Asn206, Tyr239, 257–259, and Lys269; these read DGSS and YLY. Glu275 contributes to the Mg(2+) binding site.

The protein belongs to the FBPase class 1 family. In terms of assembly, homotetramer. The cofactor is Mg(2+).

The protein localises to the cytoplasm. It catalyses the reaction beta-D-fructose 1,6-bisphosphate + H2O = beta-D-fructose 6-phosphate + phosphate. It participates in carbohydrate biosynthesis; gluconeogenesis. The chain is Fructose-1,6-bisphosphatase class 1 from Erwinia tasmaniensis (strain DSM 17950 / CFBP 7177 / CIP 109463 / NCPPB 4357 / Et1/99).